Here is a 955-residue protein sequence, read N- to C-terminus: 2-oxoglutarate dehydrogenase E1 component (955 aa).

It belongs to the alpha-ketoglutarate dehydrogenase family. As to quaternary structure, homodimer. Part of the 2-oxoglutarate dehydrogenase (OGDH) complex composed of E1 (2-oxoglutarate dehydrogenase), E2 (dihydrolipoamide succinyltransferase) and E3 (dihydrolipoamide dehydrogenase); the complex contains multiple copies of the three enzymatic components (E1, E2 and E3). Requires thiamine diphosphate as cofactor.

It catalyses the reaction N(6)-[(R)-lipoyl]-L-lysyl-[protein] + 2-oxoglutarate + H(+) = N(6)-[(R)-S(8)-succinyldihydrolipoyl]-L-lysyl-[protein] + CO2. Its function is as follows. E1 component of the 2-oxoglutarate dehydrogenase (OGDH) complex which catalyzes the decarboxylation of 2-oxoglutarate, the first step in the conversion of 2-oxoglutarate to succinyl-CoA and CO(2). This chain is 2-oxoglutarate dehydrogenase E1 component, found in Bacillus cereus (strain ATCC 14579 / DSM 31 / CCUG 7414 / JCM 2152 / NBRC 15305 / NCIMB 9373 / NCTC 2599 / NRRL B-3711).